The following is a 59-amino-acid chain: Ribosome biogenesis protein Nop10 (59 aa).

Belongs to the NOP10 family.

Functionally, involved in ribosome biogenesis; more specifically in 18S rRNA pseudouridylation and in cleavage of pre-rRNA. The chain is Ribosome biogenesis protein Nop10 from Thermococcus sibiricus (strain DSM 12597 / MM 739).